The chain runs to 813 residues: Sodium/hydrogen exchanger 2 (813 aa).

The next 7 membrane-spanning stretches (helical) occupy residues 108-128 (IVPE…IIFG), 139-159 (TDVF…YFMP), 170-190 (IFWY…LSLF), 210-230 (LFGS…FENI), 238-258 (ILVF…YNLF), 279-299 (FFVV…IAAF), and 309-329 (VIEP…AEMF). N351 carries N-linked (GlcNAc...) asparagine glycosylation. 4 helical membrane passes run 362–382 (YFMK…MGVS), 393–413 (AFVC…VFVL), 431–451 (FIIA…FLLP), and 460–480 (LFIT…GITI). The segment covering 649-661 (LRKDNSLNRERRA) has biased composition (basic and acidic residues). 2 disordered regions span residues 649–709 (LRKD…NLQP) and 736–813 (DVGS…NEKP). Over residues 687-696 (VSNADGNSSD) the composition is skewed to polar residues. Composition is skewed to basic and acidic residues over residues 770–781 (KDQRFGRGREDS) and 797–813 (RASE…NEKP).

This sequence belongs to the monovalent cation:proton antiporter 1 (CPA1) transporter (TC 2.A.36) family. As to quaternary structure, interacts with CHP1 and CHP2. As to expression, predominantly in small intestine, colon, and stomach, with much lower levels in skeletal muscle, kidney, brain, testis, uterus, heart and lung.

The protein localises to the apical cell membrane. It carries out the reaction Na(+)(in) + H(+)(out) = Na(+)(out) + H(+)(in). Li(+) activates Na(+)/H(+) exchanger. Its function is as follows. Plasma membrane Na(+)/H(+) antiporter. Mediates the electroneutral exchange of intracellular H(+) ions for extracellular Na(+). Major apical Na(+)/H(+) exchanger in the base of the colonic crypt. Controls in the colonic crypt intracellular pH (pHi) to direct colonic epithelial cell differentiation into the absorptive enterocyte lineage at the expense of the secretory lineage. The chain is Sodium/hydrogen exchanger 2 (Slc9a2) from Rattus norvegicus (Rat).